A 92-amino-acid polypeptide reads, in one-letter code: Large ribosomal subunit protein eL43 (92 aa).

Residues 39 to 60 form a C4-type zinc finger; that stretch reads CEFCGKYAVKRKAVGIWGCKAC.

It belongs to the eukaryotic ribosomal protein eL43 family.

The sequence is that of Large ribosomal subunit protein eL43 (RPL37A) from Gossypium hirsutum (Upland cotton).